The primary structure comprises 802 residues: Copal-8-ol diphosphate hydratase, chloroplastic (802 aa).

The N-terminal 24 residues, 1-24 (MQVIITSSHRFFCHHLHQLKSPTS), are a transit peptide targeting the chloroplast. K249 contacts substrate. Positions 382 and 384 each coordinate Mg(2+). A DXDD motif motif is present at residues 382 to 385 (DVDD). Position 468 (K468) interacts with substrate.

This sequence belongs to the terpene synthase family. The cofactor is Mg(2+). As to expression, expressed specifically in the secretory cells of the glandular trichomes.

It is found in the plastid. The protein resides in the chloroplast. It carries out the reaction (2E,6E,10E)-geranylgeranyl diphosphate + H2O = 8-hydroxycopalyl diphosphate. It participates in secondary metabolite biosynthesis; terpenoid biosynthesis. Its function is as follows. Class-II terpene synthase that synthesizes 8-hydroxy-copalyl diphosphate. Involved in the biosynthesis of cis-abienol, a labdane diterpene that can be used as synthesis precursor of ambergris substitution fragance products. In Nicotiana tabacum (Common tobacco), this protein is Copal-8-ol diphosphate hydratase, chloroplastic.